The primary structure comprises 539 residues: Laccase-1 (539 aa).

The first 21 residues, 1–21 (MAFTAISLFLAALGVINTAFA), serve as a signal peptide directing secretion. 2 consecutive Plastocyanin-like domains span residues 37-154 (AEVN…YDPE) and 166-309 (ESTV…HYLG). N78 is a glycosylation site (N-linked (GlcNAc...) asparagine). 2 residues coordinate Cu cation: H88 and H90. Disulfide bonds link C109/C513 and C141/C228. N-linked (GlcNAc...) asparagine glycosylation is present at N120. Cu cation is bound by residues H133 and H135. N-linked (GlcNAc...) asparagine glycosylation is found at N202, N233, N240, N293, N318, N353, N385, and N405. The Plastocyanin-like 3 domain occupies 374-495 (SPTVPVLLQI…GFAVVMAEDP (122 aa)). Residues H421, H424, and H426 each coordinate Cu cation. The N-linked (GlcNAc...) asparagine glycan is linked to N457. Cu cation is bound by residues H476, C477, H478, and H482. A glycan (N-linked (GlcNAc...) asparagine) is linked at N532.

The protein belongs to the multicopper oxidase family. Requires Cu cation as cofactor.

It is found in the secreted. It carries out the reaction 4 hydroquinone + O2 = 4 benzosemiquinone + 2 H2O. Its activity is regulated as follows. Inhibited by chloride ions. Inhibited by citrate. Inhibited by oxalate. Activated by acetate. Its function is as follows. In vitro, has activity towards 2,2'-azino-bis(3-ethylbenzthiazoline-6-sulfonic acid) (ABTS), 2,6-dimethoxy-phenol, and guaiacol. Although brown rot fungi preferentially degrade hemicellulose and cellulose, the enzyme may contribute to generating small amounts of lignin breakdown products required for catalytic reactions. In Fomitopsis schrenkii (Brown rot fungus), this protein is Laccase-1.